Here is a 1105-residue protein sequence, read N- to C-terminus: SWI/SNF complex subunit SMARCC1 (1105 aa).

Ala2 carries the post-translational modification N-acetylalanine. The marR-like, BRCT and chromo domains module stretch occupies residues 28-302 (LAVYRRKDGG…PVSFRQRIST (275 aa)). Residues 38-164 (PATKFWESPE…IEKTLVQNNC (127 aa)) form the MarR-like domain. One can recognise a BRCT; N-terminus domain in the interval 168-211 (PNIYLIPDIDLKLANKLKDIIKRHQGTFTDEKSKASHHIYPYSS). Residue Lys179 forms a Glycyl lysine isopeptide (Lys-Gly) (interchain with G-Cter in SUMO2) linkage. The Chromo domain occupies 217 to 245 (EWLRPVMRKEKQVLVHWGFYPDSYDTWVH). The BRCT; C-terminus domain maps to 261-285 (KPWKVHVKWILDTDIFNEWMNEEDY). The tract at residues 296–439 (FRQRISTKNE…DQSRSVDLGE (144 aa)) is disordered. Residues 302–318 (TKNEEPVRSPERRDRKA) show a composition bias toward basic and acidic residues. A phosphoserine mark is found at Ser310, Ser328, and Ser330. At Thr335 the chain carries Phosphothreonine. N6-acetyllysine is present on residues Lys345 and Lys346. A Phosphoserine modification is found at Ser350. Lys354 carries the post-translational modification N6-acetyllysine. The residue at position 357 (Ser357) is a Phosphoserine. N6-acetyllysine; alternate is present on Lys359. Lys359 is covalently cross-linked (Glycyl lysine isopeptide (Lys-Gly) (interchain with G-Cter in SUMO2); alternate). Phosphothreonine is present on Thr398. The SWIRM domain maps to 449–546 (IIIPSYASWF…YQVDPESRPM (98 aa)). Position 573 is a phosphoserine (Ser573). A Glycyl lysine isopeptide (Lys-Gly) (interchain with G-Cter in SUMO2) cross-link involves residue Lys592. In terms of domain architecture, SANT spans 618–669 (SAGREWTEQETLLLLEALEMYKDDWNKVSEHVGSRTQDECILHFLRLPIEDP). A Glycyl lysine isopeptide (Lys-Gly) (interchain with G-Cter in SUMO2) cross-link involves residue Lys739. Residues 745 to 860 (ARASGKVDPT…DTGKKKVEHE (116 aa)) are disordered. The segment covering 776 to 785 (AEEEKMEADP) has biased composition (acidic residues). Positions 789–860 (QPEKAENKVE…DTGKKKVEHE (72 aa)) are enriched in basic and acidic residues. A Glycyl lysine isopeptide (Lys-Gly) (interchain with G-Cter in SUMO2) cross-link involves residue Lys796. Ser822 and Ser825 each carry phosphoserine. Residues Lys829 and Lys856 each participate in a glycyl lysine isopeptide (Lys-Gly) (interchain with G-Cter in SUMO2) cross-link. A coiled-coil region spans residues 914–946 (FEELETIMDREKEALEQQRQQLLTERQNFHMEQ). Lys948 is subject to N6-acetyllysine. 2 disordered regions span residues 956–1028 (QQME…PGQH) and 1041–1105 (IHPS…SAAP). Positions 957-993 (QMEQQQHGQNPQQAHQHSGGPGLAPLGAAGHPGMMPH) are enriched in low complexity. Composition is skewed to pro residues over residues 994-1017 (QQPPPYPLMHHQMPPPHPPQPGQI) and 1048-1057 (PTPPGMPPMP). Arg1064 carries the post-translational modification Asymmetric dimethylarginine. Pro residues predominate over residues 1073–1105 (MYPPPPQQQPPPPPPADGVPPPPAPGPPASAAP).

It belongs to the SMARCC family. Component of the multiprotein chromatin-remodeling complexes SWI/SNF: SWI/SNF-A (BAF), SWI/SNF-B (PBAF) and related complexes. The canonical complex contains a catalytic subunit (either SMARCA4/BRG1/BAF190A or SMARCA2/BRM/BAF190B) and at least SMARCE1, ACTL6A/BAF53, SMARCC1/BAF155, SMARCC2/BAF170, and SMARCB1/SNF5/BAF47. Other subunits specific to each of the complexes may also be present permitting several possible combinations developmentally and tissue specific. Component of the BAF complex, which includes at least actin (ACTB), ARID1A/BAF250A, ARID1B/BAF250B, SMARCA2/BRM, SMARCA4/BRG1, ACTL6A/BAF53, ACTL6B/BAF53B, SMARCE1/BAF57, SMARCC1/BAF155, SMARCC2/BAF170, SMARCB1/SNF5/INI1, and one or more SMARCD1/BAF60A, SMARCD2/BAF60B, or SMARCD3/BAF60C. In muscle cells, the BAF complex also contains DPF3. Component of neural progenitors-specific chromatin remodeling complex (npBAF complex) composed of at least, ARID1A/BAF250A or ARID1B/BAF250B, SMARCD1/BAF60A, SMARCD3/BAF60C, SMARCA2/BRM/BAF190B, SMARCA4/BRG1/BAF190A, SMARCB1/BAF47, SMARCC1/BAF155, SMARCE1/BAF57, SMARCC2/BAF170, PHF10/BAF45A, ACTL6A/BAF53A and actin. Component of neuron-specific chromatin remodeling complex (nBAF complex) composed of at least, ARID1A/BAF250A or ARID1B/BAF250B, SMARCD1/BAF60A, SMARCD3/BAF60C, SMARCA2/BRM/BAF190B, SMARCA4/BRG1/BAF190A, SMARCB1/BAF47, SMARCC1/BAF155, SMARCE1/BAF57, SMARCC2/BAF170, DPF1/BAF45B, DPF3/BAF45C, ACTL6B/BAF53B and actin. Component of the SWI/SNF-B (PBAF) chromatin remodeling complex, at least composed of SMARCA4/BRG1, SMARCB1/BAF47/SNF5, ACTL6A/BAF53A or ACTL6B/BAF53B, SMARCE1/BAF57, SMARCD1/BAF60A, SMARCD2/BAF60B, perhaps SMARCD3/BAF60C, SMARCC1/BAF155, SMARCC2/BAF170, PBRM1/BAF180, ARID2/BAF200 and actin. Component of SWI/SNF (GBAF) subcomplex, which includes at least BICRA or BICRAL (mutually exclusive), BRD9, SS18, SMARCA2/BRM, SMARCA4/BRG1/BAF190A, ACTL6A/BAF53, SMARCC1/BAF155, and SMARCD1/BAF60A. May also interact with the SIN3A histone deacetylase transcription repressor complex in conjunction with SMARCA2 and SMARCA4. The minimal complex composed of SMARCC1 and SMARCA4 seems to be able to associate with cyclin such as CCNE1 or transcription factors such as KLF1 or GATA1. Interacts with NR3C1 and SMARD1. Interacts with TRIP12; leading to disrupt interaction between TRIP12 and SMARCE1 and prevent SMARCE1 ubiquitination. Interacts with CEBPB (when not methylated). Interacts with KDM6B. Interacts with MKKS; the interaction takes place predominantly in the cytoplasm and may modulate SMARCC1 location. Interacts with DPF2. Interacts with PRDM1/BLIMP1. Interacts with DPF3a (isoform 2 of DPF3/BAF45C) and with HDGFL2 in a DPF3a-dependent manner. Phosphorylated on undefined residues at the G2/M transition by ERK1 and other kinases. This may contribute to cell cycle specific inactivation of remodeling complexes containing the phosphorylated protein. Expressed in brain, heart, muscle, placenta, lung, liver, muscle, kidney and pancreas.

The protein resides in the nucleus. Its subcellular location is the cytoplasm. Its function is as follows. Involved in transcriptional activation and repression of select genes by chromatin remodeling (alteration of DNA-nucleosome topology). Component of SWI/SNF chromatin remodeling complexes that carry out key enzymatic activities, changing chromatin structure by altering DNA-histone contacts within a nucleosome in an ATP-dependent manner. May stimulate the ATPase activity of the catalytic subunit of the complex. Belongs to the neural progenitors-specific chromatin remodeling complex (npBAF complex) and the neuron-specific chromatin remodeling complex (nBAF complex). During neural development a switch from a stem/progenitor to a postmitotic chromatin remodeling mechanism occurs as neurons exit the cell cycle and become committed to their adult state. The transition from proliferating neural stem/progenitor cells to postmitotic neurons requires a switch in subunit composition of the npBAF and nBAF complexes. As neural progenitors exit mitosis and differentiate into neurons, npBAF complexes which contain ACTL6A/BAF53A and PHF10/BAF45A, are exchanged for homologous alternative ACTL6B/BAF53B and DPF1/BAF45B or DPF3/BAF45C subunits in neuron-specific complexes (nBAF). The npBAF complex is essential for the self-renewal/proliferative capacity of the multipotent neural stem cells. The nBAF complex along with CREST plays a role regulating the activity of genes essential for dendrite growth. This is SWI/SNF complex subunit SMARCC1 from Homo sapiens (Human).